The chain runs to 465 residues: Cysteine--tRNA ligase (465 aa).

Cysteine 27 contributes to the Zn(2+) binding site. Positions 29-39 (PTVYDDAHLGH) match the 'HIGH' region motif. Positions 207, 237, and 241 each coordinate Zn(2+). The 'KMSKS' region signature appears at 269 to 273 (KMSKS). Lysine 272 provides a ligand contact to ATP.

This sequence belongs to the class-I aminoacyl-tRNA synthetase family. In terms of assembly, monomer. Zn(2+) is required as a cofactor.

It localises to the cytoplasm. The catalysed reaction is tRNA(Cys) + L-cysteine + ATP = L-cysteinyl-tRNA(Cys) + AMP + diphosphate. This chain is Cysteine--tRNA ligase, found in Helicobacter acinonychis (strain Sheeba).